The sequence spans 256 residues: UPF0246 protein HCH_04801 (256 aa).

It belongs to the UPF0246 family.

The chain is UPF0246 protein HCH_04801 from Hahella chejuensis (strain KCTC 2396).